The primary structure comprises 336 residues: HTH-type transcriptional repressor PurR (336 aa).

One can recognise an HTH lacI-type domain in the interval A2 to V56. The segment at residues I4 to N23 is a DNA-binding region (H-T-H motif). A DNA-binding region spans residues S48–V56. Positions 73, 188, 219, and 273 each coordinate hypoxanthine.

As to quaternary structure, homodimer.

It participates in purine metabolism; purine nucleotide biosynthesis [regulation]. In terms of biological role, is the main repressor of the genes involved in the de novo synthesis of purine nucleotides, regulating purB, purC, purEK, purF, purHD, purL, purMN and guaBA expression. PurR is allosterically activated to bind its cognate DNA by binding the purine corepressors, hypoxanthine or guanine, thereby effecting transcription repression. The protein is HTH-type transcriptional repressor PurR of Actinobacillus pleuropneumoniae serotype 5b (strain L20).